We begin with the raw amino-acid sequence, 21 residues long: 5-methyltetrahydropteroyltriglutamate--homocysteine methyltransferase (21 aa).

It belongs to the vitamin-B12 independent methionine synthase family. The cofactor is Zn(2+).

It is found in the cytoplasm. The enzyme catalyses 5-methyltetrahydropteroyltri-L-glutamate + L-homocysteine = tetrahydropteroyltri-L-glutamate + L-methionine. Its pathway is amino-acid biosynthesis; L-methionine biosynthesis via de novo pathway; L-methionine from L-homocysteine (MetE route): step 1/1. Functionally, catalyzes the transfer of a methyl group from 5-methyltetrahydrofolate to homocysteine resulting in methionine formation. This Populus euphratica (Euphrates poplar) protein is 5-methyltetrahydropteroyltriglutamate--homocysteine methyltransferase.